We begin with the raw amino-acid sequence, 346 residues long: MSGEDEFYLFQNISSVGPWDGPQYHIAPVWAFHLQAAFMGFVFFAGTPLNATVLVATLHYKKLRQPLNYILVNVSLGGFLFCIFSVFTVFIASCHGYFLFGRHVCALEAFLGSVAGLVTGWSLAFLAFERYLVICKPFGNIRFNSKHALTVVLITWTIGIGVSIPPFFGWSRFIPEGLQCSCGPDWYTVGTKYRSEHYTWFLFIFCFIIPLSLICFSYFQLLRTLRAVAAQQQESATTQKAEREVSHMVVVMVGSFCLCYVPYAALAMYMVNNRNHGLYLRLVTIPAFFSKSSCVYNPIIYCFMNKQFRACILEMVCRKPMTDESDMSGSQKTEVSTVSSSKVGPH.

At 1–31 (MSGEDEFYLFQNISSVGPWDGPQYHIAPVWA) the chain is on the extracellular side. A glycan (N-linked (GlcNAc...) asparagine) is linked at asparagine 12. The chain crosses the membrane as a helical span at residues 32–56 (FHLQAAFMGFVFFAGTPLNATVLVA). Residues 57-68 (TLHYKKLRQPLN) lie on the Cytoplasmic side of the membrane. The chain crosses the membrane as a helical span at residues 69–94 (YILVNVSLGGFLFCIFSVFTVFIASC). Topologically, residues 95 to 108 (HGYFLFGRHVCALE) are extracellular. Cysteines 105 and 182 form a disulfide. A helical transmembrane segment spans residues 109 to 128 (AFLGSVAGLVTGWSLAFLAF). Residues 129 to 147 (ERYLVICKPFGNIRFNSKH) lie on the Cytoplasmic side of the membrane. A helical transmembrane segment spans residues 148–171 (ALTVVLITWTIGIGVSIPPFFGWS). The Extracellular portion of the chain corresponds to 172–197 (RFIPEGLQCSCGPDWYTVGTKYRSEH). The helical transmembrane segment at 198–225 (YTWFLFIFCFIIPLSLICFSYFQLLRTL) threads the bilayer. Over 226-247 (RAVAAQQQESATTQKAEREVSH) the chain is Cytoplasmic. Residues 248–271 (MVVVMVGSFCLCYVPYAALAMYMV) form a helical membrane-spanning segment. Residues 272 to 279 (NNRNHGLY) are Extracellular-facing. Residues 280–304 (LRLVTIPAFFSKSSCVYNPIIYCFM) traverse the membrane as a helical segment. Lysine 291 carries the N6-(retinylidene)lysine modification. Topologically, residues 305-346 (NKQFRACILEMVCRKPMTDESDMSGSQKTEVSTVSSSKVGPH) are cytoplasmic. The segment at 322 to 346 (TDESDMSGSQKTEVSTVSSSKVGPH) is disordered. Positions 330 to 346 (SQKTEVSTVSSSKVGPH) are enriched in low complexity.

It belongs to the G-protein coupled receptor 1 family. Opsin subfamily. In terms of processing, phosphorylated on some or all of the serine and threonine residues present in the C-terminal region. In terms of tissue distribution, expressed in cone photoreceptor cells.

The protein localises to the cell membrane. It is found in the photoreceptor inner segment. Its subcellular location is the cell projection. The protein resides in the cilium. It localises to the photoreceptor outer segment. The protein localises to the cytoplasm. It is found in the perinuclear region. Its function is as follows. Visual pigments are the light-absorbing molecules that mediate vision. They consist of an apoprotein, opsin, covalently linked to cis-retinal. Required for the maintenance of cone outer segment organization in the ventral retina, but not essential for the maintenance of functioning cone photoreceptors. Involved in ensuring correct abundance and localization of retinal membrane proteins. May increase spectral sensitivity in dim light. The protein is Short-wave-sensitive opsin 1 (Opn1sw) of Rattus norvegicus (Rat).